We begin with the raw amino-acid sequence, 119 residues long: Large ribosomal subunit protein uL18 (119 aa).

This sequence belongs to the universal ribosomal protein uL18 family. As to quaternary structure, part of the 50S ribosomal subunit; part of the 5S rRNA/L5/L18/L25 subcomplex. Contacts the 5S and 23S rRNAs.

In terms of biological role, this is one of the proteins that bind and probably mediate the attachment of the 5S RNA into the large ribosomal subunit, where it forms part of the central protuberance. The sequence is that of Large ribosomal subunit protein uL18 from Lactobacillus delbrueckii subsp. bulgaricus (strain ATCC 11842 / DSM 20081 / BCRC 10696 / JCM 1002 / NBRC 13953 / NCIMB 11778 / NCTC 12712 / WDCM 00102 / Lb 14).